A 522-amino-acid polypeptide reads, in one-letter code: Glucose-1-phosphate adenylyltransferase large subunit 1, chloroplastic (522 aa).

Residues 1-54 (MVVSADCRISLSAPSCIRSSSTGLTRHIKLGSFCNGELMGKKLNLSQLPNIRLR) constitute a chloroplast transit peptide. The residue at position 428 (Ser-428) is a Phosphoserine.

It belongs to the bacterial/plant glucose-1-phosphate adenylyltransferase family. Heterotetramer. Leaves.

It is found in the plastid. The protein resides in the chloroplast. The catalysed reaction is alpha-D-glucose 1-phosphate + ATP + H(+) = ADP-alpha-D-glucose + diphosphate. It participates in glycan biosynthesis; starch biosynthesis. With respect to regulation, activated by 3'phosphoglycerate, inhibited by orthophosphate. Allosteric regulation. Its function is as follows. This protein plays a role in synthesis of starch. It catalyzes the synthesis of the activated glycosyl donor, ADP-glucose from Glc-1-P and ATP. The sequence is that of Glucose-1-phosphate adenylyltransferase large subunit 1, chloroplastic (ADG2) from Arabidopsis thaliana (Mouse-ear cress).